The primary structure comprises 214 residues: MDIQQQAIGFLGGTFDPIHFGHLRPALEITEALSLQQLFIMPNHIAPHKSASHASARQRSEMVELAISHQARMTIDKRELKRHKPSYTIDTLKELKIEYPNTPICFIMGMDSLISFDKWFDWKSILSYCHLIISHRPGWQNKFNKQVGALVAKHQTTDKHDLHNIQFGKIYFQATSQLAISSTEIRTLLNQDISIDFLTPDSVINYIKEQHLYK.

The protein belongs to the NadD family.

The enzyme catalyses nicotinate beta-D-ribonucleotide + ATP + H(+) = deamido-NAD(+) + diphosphate. It participates in cofactor biosynthesis; NAD(+) biosynthesis; deamido-NAD(+) from nicotinate D-ribonucleotide: step 1/1. Catalyzes the reversible adenylation of nicotinate mononucleotide (NaMN) to nicotinic acid adenine dinucleotide (NaAD). The protein is Probable nicotinate-nucleotide adenylyltransferase of Psychromonas ingrahamii (strain DSM 17664 / CCUG 51855 / 37).